Consider the following 266-residue polypeptide: Thymidylate synthase (266 aa).

A dUMP-binding site is contributed by R24. H54 provides a ligand contact to (6R)-5,10-methylene-5,6,7,8-tetrahydrofolate. A dUMP-binding site is contributed by 129–130; the sequence is RR. The active-site Nucleophile is C149. DUMP-binding positions include 169-172, N180, and 210-212; these read RSAD and HIY. D172 is a (6R)-5,10-methylene-5,6,7,8-tetrahydrofolate binding site. A265 serves as a coordination point for (6R)-5,10-methylene-5,6,7,8-tetrahydrofolate.

The protein belongs to the thymidylate synthase family. Bacterial-type ThyA subfamily. Homodimer.

The protein resides in the cytoplasm. It catalyses the reaction dUMP + (6R)-5,10-methylene-5,6,7,8-tetrahydrofolate = 7,8-dihydrofolate + dTMP. The protein operates within pyrimidine metabolism; dTTP biosynthesis. Its function is as follows. Catalyzes the reductive methylation of 2'-deoxyuridine-5'-monophosphate (dUMP) to 2'-deoxythymidine-5'-monophosphate (dTMP) while utilizing 5,10-methylenetetrahydrofolate (mTHF) as the methyl donor and reductant in the reaction, yielding dihydrofolate (DHF) as a by-product. This enzymatic reaction provides an intracellular de novo source of dTMP, an essential precursor for DNA biosynthesis. The chain is Thymidylate synthase from Mycobacterium avium (strain 104).